The sequence spans 272 residues: Glycosylphosphatidylinositol anchor biosynthesis protein 11 (272 aa).

Over residues Gln21–Gly31 the composition is skewed to polar residues. The tract at residues Gln21–Leu48 is disordered. A compositionally biased stretch (low complexity) spans Ser32–Leu48. The next 5 membrane-spanning stretches (helical) occupy residues Val91 to Leu111, Leu145 to Phe165, Phe177 to Val197, Thr215 to Leu235, and Ile248 to Trp268.

Belongs to the PIGF family.

It is found in the endoplasmic reticulum membrane. It participates in glycolipid biosynthesis; glycosylphosphatidylinositol-anchor biosynthesis. Acts in the GPI biosynthetic pathway between GlcNAc-PI synthesis and GPI transfer to protein. The sequence is that of Glycosylphosphatidylinositol anchor biosynthesis protein 11 (gpi-11) from Neurospora crassa (strain ATCC 24698 / 74-OR23-1A / CBS 708.71 / DSM 1257 / FGSC 987).